We begin with the raw amino-acid sequence, 103 residues long: Large ribosomal subunit protein bL21 (103 aa).

It belongs to the bacterial ribosomal protein bL21 family. As to quaternary structure, part of the 50S ribosomal subunit. Contacts protein L20.

This protein binds to 23S rRNA in the presence of protein L20. The chain is Large ribosomal subunit protein bL21 from Burkholderia ambifaria (strain MC40-6).